The following is a 273-amino-acid chain: Hydroxyethylthiazole kinase (273 aa).

Methionine 47 is a binding site for substrate. ATP contacts are provided by arginine 123 and threonine 169. Glycine 196 serves as a coordination point for substrate.

This sequence belongs to the Thz kinase family. It depends on Mg(2+) as a cofactor.

It carries out the reaction 5-(2-hydroxyethyl)-4-methylthiazole + ATP = 4-methyl-5-(2-phosphooxyethyl)-thiazole + ADP + H(+). Its pathway is cofactor biosynthesis; thiamine diphosphate biosynthesis; 4-methyl-5-(2-phosphoethyl)-thiazole from 5-(2-hydroxyethyl)-4-methylthiazole: step 1/1. Its function is as follows. Catalyzes the phosphorylation of the hydroxyl group of 4-methyl-5-beta-hydroxyethylthiazole (THZ). The sequence is that of Hydroxyethylthiazole kinase from Desulfotalea psychrophila (strain LSv54 / DSM 12343).